The sequence spans 118 residues: SPbeta prophage-derived uncharacterized protein YoqR (118 aa).

In Bacillus subtilis (strain 168), this protein is SPbeta prophage-derived uncharacterized protein YoqR (yoqR).